Consider the following 336-residue polypeptide: MLYPLARHFLFKLNPEQAHDLSIKYLPRLLGTPLDCFFRHSLPKRPVTVMGLSFANPVGLAAGLDKDGECIDAFGAMGFGFIEVGTVTPRPQSGNDKPRLFRVIPAEGIINRMGFNNKGVDHLVAQVKKAKYQGVIGINIGKNKDTPIEQGKDDYLICMDKVYDQAGYIAVNISSPNTPGLRSLQYGDALDELLAALKVRQQELAAQYKKYVPLAVKIAPDLTPDEINQVAASLIKNGIDGVIATNTTLERDMIYDMPHAAEAGGLSGRPLQHKSTEVIRQLAKALDGALPIIGVGGIDSAMAAREKLAAGASLVQIYSGFIYKGPDLVKEIVTHI.

Residues 62–66 (AGLDK) and T86 each bind FMN. Position 66 (K66) interacts with substrate. A substrate-binding site is contributed by 111–115 (NRMGF). N139 and N172 together coordinate FMN. Residue N172 participates in substrate binding. The active-site Nucleophile is S175. Residue N177 coordinates substrate. K217 and T245 together coordinate FMN. 246-247 (NT) provides a ligand contact to substrate. FMN contacts are provided by residues G268, G297, and 318 to 319 (YS).

The protein belongs to the dihydroorotate dehydrogenase family. Type 2 subfamily. As to quaternary structure, monomer. FMN serves as cofactor.

Its subcellular location is the cell membrane. The catalysed reaction is (S)-dihydroorotate + a quinone = orotate + a quinol. It functions in the pathway pyrimidine metabolism; UMP biosynthesis via de novo pathway; orotate from (S)-dihydroorotate (quinone route): step 1/1. Functionally, catalyzes the conversion of dihydroorotate to orotate with quinone as electron acceptor. The protein is Dihydroorotate dehydrogenase (quinone) of Aeromonas hydrophila subsp. hydrophila (strain ATCC 7966 / DSM 30187 / BCRC 13018 / CCUG 14551 / JCM 1027 / KCTC 2358 / NCIMB 9240 / NCTC 8049).